The sequence spans 100 residues: Aspartyl/glutamyl-tRNA(Asn/Gln) amidotransferase subunit C (100 aa).

Belongs to the GatC family. Heterotrimer of A, B and C subunits.

The enzyme catalyses L-glutamyl-tRNA(Gln) + L-glutamine + ATP + H2O = L-glutaminyl-tRNA(Gln) + L-glutamate + ADP + phosphate + H(+). It catalyses the reaction L-aspartyl-tRNA(Asn) + L-glutamine + ATP + H2O = L-asparaginyl-tRNA(Asn) + L-glutamate + ADP + phosphate + 2 H(+). In terms of biological role, allows the formation of correctly charged Asn-tRNA(Asn) or Gln-tRNA(Gln) through the transamidation of misacylated Asp-tRNA(Asn) or Glu-tRNA(Gln) in organisms which lack either or both of asparaginyl-tRNA or glutaminyl-tRNA synthetases. The reaction takes place in the presence of glutamine and ATP through an activated phospho-Asp-tRNA(Asn) or phospho-Glu-tRNA(Gln). This chain is Aspartyl/glutamyl-tRNA(Asn/Gln) amidotransferase subunit C, found in Streptococcus equi subsp. equi (strain 4047).